A 128-amino-acid chain; its full sequence is Aspartate 1-decarboxylase (128 aa).

Ser-25 functions as the Schiff-base intermediate with substrate; via pyruvic acid in the catalytic mechanism. Pyruvic acid (Ser) is present on Ser-25. Substrate is bound at residue Thr-57. Catalysis depends on Tyr-58, which acts as the Proton donor. Position 73–75 (73–75) interacts with substrate; it reads GAA.

This sequence belongs to the PanD family. Heterooctamer of four alpha and four beta subunits. Pyruvate is required as a cofactor. In terms of processing, is synthesized initially as an inactive proenzyme, which is activated by self-cleavage at a specific serine bond to produce a beta-subunit with a hydroxyl group at its C-terminus and an alpha-subunit with a pyruvoyl group at its N-terminus.

The protein localises to the cytoplasm. The enzyme catalyses L-aspartate + H(+) = beta-alanine + CO2. The protein operates within cofactor biosynthesis; (R)-pantothenate biosynthesis; beta-alanine from L-aspartate: step 1/1. In terms of biological role, catalyzes the pyruvoyl-dependent decarboxylation of aspartate to produce beta-alanine. The sequence is that of Aspartate 1-decarboxylase from Staphylococcus epidermidis (strain ATCC 35984 / DSM 28319 / BCRC 17069 / CCUG 31568 / BM 3577 / RP62A).